Consider the following 151-residue polypeptide: Ocs element-binding factor 1 (151 aa).

Polar residues predominate over residues 1–17 (MSSSSLSPTAGRTSGSD). The tract at residues 1–47 (MSSSSLSPTAGRTSGSDGDSAADTHRREKRRLSNRESARRSRLRKQQ) is disordered. Basic and acidic residues predominate over residues 22 to 39 (ADTHRREKRRLSNRESAR). The bZIP domain occupies 24–87 (THRREKRRLS…TRVEQENTVL (64 aa)). The basic motif stretch occupies residues 26-45 (RREKRRLSNRESARRSRLRK). The interval 52–59 (LVQEVARL) is leucine-zipper.

It belongs to the bZIP family. As to expression, roots and shoots of young plants, and basal portion of leaves.

It localises to the nucleus. Its function is as follows. May contribute to developmentally specific patterns of gene expression. Binds specifically to ocs elements which are transcriptional enhancer found in the promoters of several plant genes. OCSBF-1 is able to bind to a site within each half of the ocs element as well as to animal AP-1 and CREB sites. This Zea mays (Maize) protein is Ocs element-binding factor 1 (OBF1).